The following is a 238-amino-acid chain: Survival of motor neuron-related-splicing factor 30 (238 aa).

The 61-residue stretch at 72-132 (SWKVGDKCMA…KPVEEGRKAK (61 aa)) folds into the Tudor domain. Positions 142 to 160 (KKEMIAQQREYKKKKALKK) match the Nuclear localization signal motif. Residue serine 201 is modified to Phosphoserine. Lysine 219 bears the N6-acetyllysine mark.

Belongs to the SMN family. Associates with spliceosomes. Associates with U4/U5/U6 tri-snRNP and with U2 snRNP. Interacts (via Tudor domain) with SNRPD3 (via C-terminus); the interaction is direct. Detected at intermediate levels in skeletal muscle, and at low levels in heart and pancreas.

Its subcellular location is the nucleus speckle. It localises to the nucleus. The protein localises to the cajal body. Functionally, involved in spliceosome assembly. This chain is Survival of motor neuron-related-splicing factor 30 (SMNDC1), found in Homo sapiens (Human).